Reading from the N-terminus, the 38-residue chain is Photosystem II reaction center protein L (38 aa).

A helical transmembrane segment spans residues 17–37; sequence SLYWGLLLIFVLAVLFSSYIF.

Belongs to the PsbL family. PSII is composed of 1 copy each of membrane proteins PsbA, PsbB, PsbC, PsbD, PsbE, PsbF, PsbH, PsbI, PsbJ, PsbK, PsbL, PsbM, PsbT, PsbY, PsbZ, Psb30/Ycf12, at least 3 peripheral proteins of the oxygen-evolving complex and a large number of cofactors. It forms dimeric complexes.

It localises to the plastid. The protein resides in the chloroplast thylakoid membrane. Its function is as follows. One of the components of the core complex of photosystem II (PSII). PSII is a light-driven water:plastoquinone oxidoreductase that uses light energy to abstract electrons from H(2)O, generating O(2) and a proton gradient subsequently used for ATP formation. It consists of a core antenna complex that captures photons, and an electron transfer chain that converts photonic excitation into a charge separation. This subunit is found at the monomer-monomer interface and is required for correct PSII assembly and/or dimerization. In Euglena gracilis, this protein is Photosystem II reaction center protein L.